The chain runs to 211 residues: Orotate phosphoribosyltransferase (211 aa).

Residue K26 participates in 5-phospho-alpha-D-ribose 1-diphosphate binding. Position 34–35 (34–35 (FF)) interacts with orotate. 5-phospho-alpha-D-ribose 1-diphosphate-binding positions include 72–73 (YK), R98, K99, K102, H104, and 123–131 (DDVITAGTA). Positions 127 and 155 each coordinate orotate.

The protein belongs to the purine/pyrimidine phosphoribosyltransferase family. PyrE subfamily. In terms of assembly, homodimer. Requires Mg(2+) as cofactor.

The catalysed reaction is orotidine 5'-phosphate + diphosphate = orotate + 5-phospho-alpha-D-ribose 1-diphosphate. It participates in pyrimidine metabolism; UMP biosynthesis via de novo pathway; UMP from orotate: step 1/2. Functionally, catalyzes the transfer of a ribosyl phosphate group from 5-phosphoribose 1-diphosphate to orotate, leading to the formation of orotidine monophosphate (OMP). This chain is Orotate phosphoribosyltransferase, found in Legionella pneumophila (strain Lens).